We begin with the raw amino-acid sequence, 208 residues long: Protein GrpE (208 aa).

Over residues 1–12 (MTNKDESVEKNT) the composition is skewed to basic and acidic residues. The disordered stretch occupies residues 1 to 59 (MTNKDESVEKNTESTVEETNIKQNIDDSVEQAEESKGHLQDEAIEETSDENVIEEIDPK). Polar residues predominate over residues 13-23 (ESTVEETNIKQ). Acidic residues predominate over residues 42-55 (EAIEETSDENVIEE).

Belongs to the GrpE family. In terms of assembly, homodimer.

Its subcellular location is the cytoplasm. In terms of biological role, participates actively in the response to hyperosmotic and heat shock by preventing the aggregation of stress-denatured proteins, in association with DnaK and GrpE. It is the nucleotide exchange factor for DnaK and may function as a thermosensor. Unfolded proteins bind initially to DnaJ; upon interaction with the DnaJ-bound protein, DnaK hydrolyzes its bound ATP, resulting in the formation of a stable complex. GrpE releases ADP from DnaK; ATP binding to DnaK triggers the release of the substrate protein, thus completing the reaction cycle. Several rounds of ATP-dependent interactions between DnaJ, DnaK and GrpE are required for fully efficient folding. This is Protein GrpE from Staphylococcus aureus (strain Mu3 / ATCC 700698).